A 485-amino-acid chain; its full sequence is Iroquois-class homeodomain protein IRX-4 (485 aa).

The homeobox; TALE-type DNA-binding region spans 142–203 (GTRRKNATRE…NARRRLKKEN (62 aa)). Residues 206–313 (TWPPRNKCSD…EEEEAAERAR (108 aa)) form a disordered region. The segment covering 221–232 (EEEEEEEEECSQ) has biased composition (acidic residues). The span at 234–253 (DAMKSEKAEEPTGKEEKELE) shows a compositional bias: basic and acidic residues. Over residues 254–269 (LSDLEDLDAAESESSE) the composition is skewed to acidic residues. A compositionally biased stretch (pro residues) spans 282–294 (HPLPGGGPPPRAA).

Belongs to the TALE/IRO homeobox family. As to expression, ventricles of the heart, developing feather buds, retina, hindbrain.

The protein resides in the nucleus. Its function is as follows. Regulates the chamber-specific expression of myosin isoforms by activating the expression of the ventricle myosin heavy chain-1 (Vmhc1) and suppressing the expression of the atrial myosin heavy chain-1 (Amhc1) in the ventricles. May play a critical role in establishing chamber-specific gene expression in the developing heart. The protein is Iroquois-class homeodomain protein IRX-4 (IRX4) of Gallus gallus (Chicken).